Consider the following 579-residue polypeptide: Protein inscuteable homolog (579 aa).

The tract at residues 74 to 89 is important for interaction with GPSM2; it reads SVQRWMEDLKLMTECE. A PDZ-binding motif is present at residues 576–579; that stretch reads ESFV.

In terms of assembly, interacts with ALS2CR19/PAR3B and GPSM1/AGS3. Interacts with F2RL2/PAR3. Interacts with GPSM2/LGN (via TPR repeat region). Expressed in brain, kidney, liver, testis and skin.

It localises to the cytoplasm. Its subcellular location is the cell cortex. Functionally, may function as an adapter linking the Par3 complex to the GPSM1/GPSM2 complex. Involved in spindle orientation during mitosis. May regulate cell proliferation and differentiation in the developing nervous system. May play a role in the asymmetric division of fibroblasts and participate in the process of stratification of the squamous epithelium. This Mus musculus (Mouse) protein is Protein inscuteable homolog (Insc).